The chain runs to 397 residues: Mannitol-1-phosphate 5-dehydrogenase (397 aa).

An NAD(+)-binding site is contributed by 9–20; it reads AVHFGAGNIGRG. Lys220 is a catalytic residue.

The protein belongs to the mannitol dehydrogenase family. As to quaternary structure, monomer.

It catalyses the reaction D-mannitol 1-phosphate + NAD(+) = beta-D-fructose 6-phosphate + NADH + H(+). In terms of biological role, catalyzes the NAD(H)-dependent interconversion of D-fructose 6-phosphate and D-mannitol 1-phosphate in the mannitol metabolic pathway. The polypeptide is Mannitol-1-phosphate 5-dehydrogenase (Podospora anserina (strain S / ATCC MYA-4624 / DSM 980 / FGSC 10383) (Pleurage anserina)).